The primary structure comprises 587 residues: Monocopper oxidase-like protein SKU5 (587 aa).

The signal sequence occupies residues 1–20; the sequence is MDLFKILLLVFFVNISFCFA. Residues Asn14 and Asn58 are each glycosylated (N-linked (GlcNAc...) asparagine). Residue His80 participates in Cu cation binding. Asn107, Asn169, Asn200, Asn257, Asn278, Asn293, Asn342, Asn362, Asn430, and Asn444 each carry an N-linked (GlcNAc...) asparagine glycan. His452 is a Cu cation binding site. Residue Asn534 is glycosylated (N-linked (GlcNAc...) asparagine). Residue Ser562 is the site of GPI-anchor amidated serine attachment. The propeptide at 563 to 587 is removed in mature form; sequence ASKSIGFTSLSMVVMALVMMMMLQH.

Belongs to the multicopper oxidase family. Requires Cu cation as cofactor. As to expression, expressed in roots, hypocotyls, cotyledons, leaves, stems and flowers.

The protein localises to the secreted. It is found in the cell wall. Its subcellular location is the cell membrane. Functionally, may be a monocopper oxidase of unknown specificity. Involved in directional growth processes, possibly by participating in cell wall expansion. This is Monocopper oxidase-like protein SKU5 (SKU5) from Arabidopsis thaliana (Mouse-ear cress).